The sequence spans 379 residues: Anhydro-N-acetylmuramic acid kinase (379 aa).

9 to 16 (GTSVDGID) contacts ATP.

This sequence belongs to the anhydro-N-acetylmuramic acid kinase family.

The enzyme catalyses 1,6-anhydro-N-acetyl-beta-muramate + ATP + H2O = N-acetyl-D-muramate 6-phosphate + ADP + H(+). It participates in amino-sugar metabolism; 1,6-anhydro-N-acetylmuramate degradation. It functions in the pathway cell wall biogenesis; peptidoglycan recycling. In terms of biological role, catalyzes the specific phosphorylation of 1,6-anhydro-N-acetylmuramic acid (anhMurNAc) with the simultaneous cleavage of the 1,6-anhydro ring, generating MurNAc-6-P. Is required for the utilization of anhMurNAc either imported from the medium or derived from its own cell wall murein, and thus plays a role in cell wall recycling. The chain is Anhydro-N-acetylmuramic acid kinase from Picosynechococcus sp. (strain ATCC 27264 / PCC 7002 / PR-6) (Agmenellum quadruplicatum).